A 308-amino-acid chain; its full sequence is F-actin-capping protein subunit alpha (308 aa).

It belongs to the F-actin-capping protein alpha subunit family. In terms of assembly, component of the F-actin capping complex, composed of a heterodimer of an alpha and a beta subunit.

Its function is as follows. F-actin-capping proteins bind in a Ca(2+)-independent manner to the fast growing ends of actin filaments (barbed end) thereby blocking the exchange of subunits at these ends. Unlike other capping proteins (such as gelsolin and severin), these proteins do not sever actin filaments. The protein is F-actin-capping protein subunit alpha of Arabidopsis thaliana (Mouse-ear cress).